Here is a 166-residue protein sequence, read N- to C-terminus: Large ribosomal subunit protein uL10 (166 aa).

It belongs to the universal ribosomal protein uL10 family. Part of the ribosomal stalk of the 50S ribosomal subunit. The N-terminus interacts with L11 and the large rRNA to form the base of the stalk. The C-terminus forms an elongated spine to which L12 dimers bind in a sequential fashion forming a multimeric L10(L12)X complex.

Its function is as follows. Forms part of the ribosomal stalk, playing a central role in the interaction of the ribosome with GTP-bound translation factors. This chain is Large ribosomal subunit protein uL10, found in Hydrogenovibrio crunogenus (strain DSM 25203 / XCL-2) (Thiomicrospira crunogena).